A 429-amino-acid chain; its full sequence is Glutamate-1-semialdehyde 2,1-aminomutase 2 (429 aa).

The residue at position 268 (lysine 268) is an N6-(pyridoxal phosphate)lysine.

The protein belongs to the class-III pyridoxal-phosphate-dependent aminotransferase family. HemL subfamily. As to quaternary structure, homodimer. Requires pyridoxal 5'-phosphate as cofactor.

It is found in the cytoplasm. It carries out the reaction (S)-4-amino-5-oxopentanoate = 5-aminolevulinate. Its pathway is porphyrin-containing compound metabolism; protoporphyrin-IX biosynthesis; 5-aminolevulinate from L-glutamyl-tRNA(Glu): step 2/2. The polypeptide is Glutamate-1-semialdehyde 2,1-aminomutase 2 (Geobacillus thermodenitrificans (strain NG80-2)).